The following is a 381-amino-acid chain: MNIYKPIRKTHPIFKIINGSLIDLPTPSNISSLWNFGSLLAMCLIIQIITGLFLTMYYTANIELAFYSVNYICRNVNYGWLIRTLHANGASFFFICIYIHIGRGIYYESFNLKYTWMVGVIILFLLMATAFMGYVLPWGQMSFWGATVITNLLSAIPYLGTMLVNWIWGGFAIDNATLTRFYTFHFILPFIILMMTMIHLLFLHQTGSNNPLGINSNLDKIPFHPFFTFKDMIGFIIISFLLIFLTLTNPYLLGDPDNFTPANPLVTPIHIQPEWYFLFAYAILRSIPNKLGGVIALIMSILILIILPLTFFKKIQGIQFYPMNQILFWIMVVTIILLTWIGARPVEDPYVFVGQVLTIMYFSYYIINPMISIYWDKLIFN.

4 consecutive transmembrane segments (helical) span residues 36–56, 80–101, 116–136, and 181–201; these read FGSL…FLTM, WLIR…YIHI, WMVG…GYVL, and FYTF…IHLL. Heme b contacts are provided by H86 and H100. H185 and H199 together coordinate heme b. Residue H204 participates in a ubiquinone binding. 4 helical membrane passes run 229 to 249, 291 to 311, 323 to 343, and 350 to 370; these read FKDM…TLTN, LGGV…PLTF, MNQI…WIGA, and YVFV…INPM.

Belongs to the cytochrome b family. As to quaternary structure, the main subunits of complex b-c1 are: cytochrome b, cytochrome c1 and the Rieske protein. Requires heme b as cofactor.

It localises to the mitochondrion inner membrane. In terms of biological role, component of the ubiquinol-cytochrome c reductase complex (complex III or cytochrome b-c1 complex) that is part of the mitochondrial respiratory chain. The b-c1 complex mediates electron transfer from ubiquinol to cytochrome c. Contributes to the generation of a proton gradient across the mitochondrial membrane that is then used for ATP synthesis. The chain is Cytochrome b (MT-CYB) from Ostrinia nubilalis (European corn borer).